Consider the following 358-residue polypeptide: Peroxidase 54 (358 aa).

The first 31 residues, 1–31, serve as a signal peptide directing secretion; that stretch reads MAVTSSSSTCDGFFIISLIVIVSSLFGTSSA. Gln-32 is modified (pyrrolidone carboxylic acid). 2 N-linked (GlcNAc...) asparagine glycosylation sites follow: Asn-34 and Asn-44. Cystine bridges form between Cys-42/Cys-122, Cys-75/Cys-80, Cys-128/Cys-330, and Cys-207/Cys-239. Residue His-73 is the Proton acceptor of the active site. The Ca(2+) site is built by Asp-74, Val-77, Gly-79, Asp-81, and Ser-83. Residues Asn-103, Asn-161, and Asn-166 are each glycosylated (N-linked (GlcNAc...) asparagine). Position 170 (Pro-170) interacts with substrate. A glycan (N-linked (GlcNAc...) asparagine) is linked at Asn-178. His-200 provides a ligand contact to heme b. Thr-201 contributes to the Ca(2+) binding site. Asn-218, Asn-228, and Asn-242 each carry an N-linked (GlcNAc...) asparagine glycan. Ca(2+) is bound by residues Asp-252, Thr-255, and Asp-260. An N-linked (GlcNAc...) asparagine glycan is attached at Asn-298.

Belongs to the peroxidase family. Classical plant (class III) peroxidase subfamily. It depends on heme b as a cofactor. Requires Ca(2+) as cofactor.

The protein resides in the secreted. Its subcellular location is the vacuole. The enzyme catalyses 2 a phenolic donor + H2O2 = 2 a phenolic radical donor + 2 H2O. Removal of H(2)O(2), oxidation of toxic reductants, biosynthesis and degradation of lignin, suberization, auxin catabolism, response to environmental stresses such as wounding, pathogen attack and oxidative stress. These functions might be dependent on each isozyme/isoform in each plant tissue. In Arabidopsis thaliana (Mouse-ear cress), this protein is Peroxidase 54 (PER54).